Consider the following 131-residue polypeptide: Small ribosomal subunit protein uS8 (131 aa).

Belongs to the universal ribosomal protein uS8 family. In terms of assembly, part of the 30S ribosomal subunit. Contacts proteins S5 and S12.

One of the primary rRNA binding proteins, it binds directly to 16S rRNA central domain where it helps coordinate assembly of the platform of the 30S subunit. The chain is Small ribosomal subunit protein uS8 from Parabacteroides distasonis (strain ATCC 8503 / DSM 20701 / CIP 104284 / JCM 5825 / NCTC 11152).